A 209-amino-acid chain; its full sequence is Thymidylate kinase (209 aa).

11–18 (GPDGAGKT) serves as a coordination point for ATP.

This sequence belongs to the thymidylate kinase family.

It catalyses the reaction dTMP + ATP = dTDP + ADP. Phosphorylation of dTMP to form dTDP in both de novo and salvage pathways of dTTP synthesis. The sequence is that of Thymidylate kinase from Streptococcus thermophilus (strain ATCC BAA-250 / LMG 18311).